We begin with the raw amino-acid sequence, 86 residues long: Omega-theraphotoxin-Hhn1b (86 aa).

A signal peptide spans 1-21 (MKSIVFVALFGLALLAVVCSA). The propeptide occupies 22 to 50 (SEDAHKELLKEVVRAMVVDKTDAVQAEER). 3 cysteine pairs are disulfide-bonded: C52–C66, C59–C71, and C65–C78.

The protein belongs to the neurotoxin 10 (Hwtx-1) family. 17 (Hntx-9) subfamily. As to expression, expressed by the venom gland.

The protein resides in the secreted. Functionally, ion channel inhibitor. In Cyriopagopus hainanus (Chinese bird spider), this protein is Omega-theraphotoxin-Hhn1b.